The following is a 639-amino-acid chain: Chaperone protein DnaK (639 aa).

Residue Thr-198 is modified to Phosphothreonine; by autocatalysis. The disordered stretch occupies residues 601 to 639; that stretch reads AQQAPGADSCGGDCGQQQEAGAKPKDEKVVDADFEEVKK. Residues 622-639 are compositionally biased toward basic and acidic residues; that stretch reads AKPKDEKVVDADFEEVKK.

The protein belongs to the heat shock protein 70 family.

Acts as a chaperone. This is Chaperone protein DnaK from Trichlorobacter lovleyi (strain ATCC BAA-1151 / DSM 17278 / SZ) (Geobacter lovleyi).